We begin with the raw amino-acid sequence, 645 residues long: MIKITLPDGSIREYEKGITSMGIALSISEGLARNVLAAKVNGEIWDASRAITSDSTVQLLTWNDTEGKSTFWHSSAHLLAEALEALYPGTKFGIGPAIETGFYYDVDFGDRAFSQDDFENIEKKVLELAKQKNAYIRKEISKKDAVAYFTDKQDPYKLDLLEGLSDGSITFYKQGAFTDLCRGPHIPDTGFIKAVKLMSVAGAYWRGDEKSKQLTRIYGVTFPKQQELKDYLTILEEAKKRDHRKLGKELELFAFSEKVGMGLPLWLPKGALLRERLENFLKKAQVRAGYQPVVTPHIGNKQLYVTSGHFDKYGKDSFQPIFTPHEGEQFLLKPMNCPHHCEIYKTKPRSYKDLPIRFAEFGTVYRYEQSGELHGLTRVRGFTQDDAHIFCRPDQVKEEFLKVIDLVLYVFKVLGFNDYTAQISLRDPENKDKYIGEDEQWQKAEQAIIEASAEKGLSTVTELGEAAFYGPKLDFMVKDALGRKWQLGTIQVDYQLPNRFELEYTGSDNQKHRPVMLHRAPFGSLERFIAVLIEHVAGNFPLWLSPDQIAILPISEKFNDYAQDVYDRLLVKDIRGFIDNRDEKIGKKIRDTEVKKVPFMLVIGEKEVNEGKIAIRKHGGEDLGSMLVEDFIQYFESEIAKQLAV.

The region spanning 1–61 (MIKITLPDGS…TSDSTVQLLT (61 aa)) is the TGS domain. The catalytic stretch occupies residues 242 to 541 (DHRKLGKELE…LIEHVAGNFP (300 aa)). Zn(2+)-binding residues include Cys337, His388, and His518.

The protein belongs to the class-II aminoacyl-tRNA synthetase family. In terms of assembly, homodimer. Zn(2+) is required as a cofactor.

It localises to the cytoplasm. The enzyme catalyses tRNA(Thr) + L-threonine + ATP = L-threonyl-tRNA(Thr) + AMP + diphosphate + H(+). Functionally, catalyzes the attachment of threonine to tRNA(Thr) in a two-step reaction: L-threonine is first activated by ATP to form Thr-AMP and then transferred to the acceptor end of tRNA(Thr). Also edits incorrectly charged L-seryl-tRNA(Thr). In Cytophaga hutchinsonii (strain ATCC 33406 / DSM 1761 / CIP 103989 / NBRC 15051 / NCIMB 9469 / D465), this protein is Threonine--tRNA ligase.